Here is a 354-residue protein sequence, read N- to C-terminus: Myosin-binding protein H-like (354 aa).

The tract at residues 1–47 (MEAATAPEVAAGSKLKVKEASPADAEPPQASPGQGAGSPTPQLLPPI) is disordered. Ser38 carries the phosphoserine modification. One can recognise an Ig-like C2-type 1 domain in the interval 45–139 (PPIEEHPKIW…GGLEATATID (95 aa)). One can recognise a Fibronectin type-III domain in the interval 148–238 (PPQSIKLVDV…ETAPITTDLA (91 aa)). Positions 261 to 345 (PKFTQPLADC…VNPLGEASVD (85 aa)) constitute an Ig-like C2-type 2 domain. Cys282 and Cys333 form a disulfide bridge. Arg321 bears the Omega-N-methylarginine mark.

This sequence belongs to the immunoglobulin superfamily. MyBP family. Expressed in heart, with higher expression in the atria. As to expression, expressed in left atrium and ventricle, arteria mammaria interna and skeletal muscle. In terms of tissue distribution, expressed specifically en the left atrium.

The protein localises to the cytoplasm. It localises to the myofibril. It is found in the sarcomere. Its function is as follows. Myosin-binding protein which plays a role in cardiac function. Seems to regulate conduction in the atria and ventricular conduction systems. The sequence is that of Myosin-binding protein H-like from Homo sapiens (Human).